Reading from the N-terminus, the 465-residue chain is UDP-N-acetylmuramate--L-alanine ligase (465 aa).

112-118 (GTHGKTT) contributes to the ATP binding site.

The protein belongs to the MurCDEF family.

It localises to the cytoplasm. The catalysed reaction is UDP-N-acetyl-alpha-D-muramate + L-alanine + ATP = UDP-N-acetyl-alpha-D-muramoyl-L-alanine + ADP + phosphate + H(+). It participates in cell wall biogenesis; peptidoglycan biosynthesis. Cell wall formation. This is UDP-N-acetylmuramate--L-alanine ligase from Burkholderia pseudomallei (strain 1106a).